Here is a 419-residue protein sequence, read N- to C-terminus: DNA primase DnaG (419 aa).

In terms of domain architecture, Toprim spans 168-244; the sequence is DTIIVVEGRS…KVDYVARAPE (77 aa). 3 residues coordinate Mg(2+): Glu-174, Asp-218, and Asp-220. Composition is skewed to basic and acidic residues over residues 280-291 and 306-316; these read KPAEEAVKREEE and KAAKPPEEKPP. Residues 280–317 are disordered; the sequence is KPAEEAVKREEEAAAEAKPPAPAVQEKAAKPPEEKPPT.

Belongs to the archaeal DnaG primase family. In terms of assembly, forms a ternary complex with MCM helicase and DNA. Component of the archaeal exosome complex. The cofactor is Mg(2+).

It catalyses the reaction ssDNA + n NTP = ssDNA/pppN(pN)n-1 hybrid + (n-1) diphosphate.. Functionally, RNA polymerase that catalyzes the synthesis of short RNA molecules used as primers for DNA polymerase during DNA replication. Also part of the exosome, which is a complex involved in RNA degradation. Acts as a poly(A)-binding protein that enhances the interaction between heteromeric, adenine-rich transcripts and the exosome. In Aeropyrum pernix (strain ATCC 700893 / DSM 11879 / JCM 9820 / NBRC 100138 / K1), this protein is DNA primase DnaG.